The chain runs to 452 residues: Pup--protein ligase (452 aa).

Glutamate 9 contributes to the Mg(2+) binding site. Arginine 53 lines the ATP pocket. Tyrosine 55 is a Mg(2+) binding site. The active-site Proton acceptor is aspartate 57. A Mg(2+)-binding site is contributed by glutamate 63. Residues threonine 66 and tryptophan 419 each contribute to the ATP site.

This sequence belongs to the Pup ligase/Pup deamidase family. Pup-conjugating enzyme subfamily.

The catalysed reaction is ATP + [prokaryotic ubiquitin-like protein]-L-glutamate + [protein]-L-lysine = ADP + phosphate + N(6)-([prokaryotic ubiquitin-like protein]-gamma-L-glutamyl)-[protein]-L-lysine.. The protein operates within protein degradation; proteasomal Pup-dependent pathway. Its pathway is protein modification; protein pupylation. Its function is as follows. Catalyzes the covalent attachment of the prokaryotic ubiquitin-like protein modifier Pup to the proteasomal substrate proteins, thereby targeting them for proteasomal degradation. This tagging system is termed pupylation. The ligation reaction involves the side-chain carboxylate of the C-terminal glutamate of Pup and the side-chain amino group of a substrate lysine. This is Pup--protein ligase from Salinispora tropica (strain ATCC BAA-916 / DSM 44818 / JCM 13857 / NBRC 105044 / CNB-440).